Reading from the N-terminus, the 278-residue chain is Phosphatidylglycerol--prolipoprotein diacylglyceryl transferase (278 aa).

3 helical membrane passes run 13 to 33, 50 to 70, and 89 to 109; these read LFGI…ALAV, VFDF…LYYV, and NGGL…FFFT. Residue Arg135 participates in a 1,2-diacyl-sn-glycero-3-phospho-(1'-sn-glycerol) binding. The next 3 helical transmembrane spans lie at 175 to 195, 205 to 225, and 236 to 256; these read QPTF…LVLL, GEVF…IEGL, and IRVS…IVIV.

The protein belongs to the Lgt family.

The protein resides in the cell membrane. It carries out the reaction L-cysteinyl-[prolipoprotein] + a 1,2-diacyl-sn-glycero-3-phospho-(1'-sn-glycerol) = an S-1,2-diacyl-sn-glyceryl-L-cysteinyl-[prolipoprotein] + sn-glycerol 1-phosphate + H(+). It participates in protein modification; lipoprotein biosynthesis (diacylglyceryl transfer). Functionally, catalyzes the transfer of the diacylglyceryl group from phosphatidylglycerol to the sulfhydryl group of the N-terminal cysteine of a prolipoprotein, the first step in the formation of mature lipoproteins. This Enterococcus faecalis (strain ATCC 700802 / V583) protein is Phosphatidylglycerol--prolipoprotein diacylglyceryl transferase.